The sequence spans 24 residues: Lantibiotic 107891 (24 aa).

(E)-2,3-didehydrobutyrine is present on threonine 2. The segment at residues 3 to 7 (SWSLC) is a cross-link (lanthionine (Ser-Cys)). Tryptophan 4 is subject to 6'-chlorotryptophan. 2,3-didehydroalanine (Ser) is present on serine 5. Positions 8–11 (TPGC) form a cross-link, beta-methyllanthionine (Thr-Cys). Cross-links (lanthionine (Ser-Cys)) lie at residues 13-20 (SPGGGSNC) and 18-23 (SNCSFC). The residue at position 14 (proline 14) is a 3,4-dihydroxyproline; in form A1. Proline 14 is subject to 4-hydroxyproline; in form A2. Residues 21–24 (SFCC) constitute a cross-link (S-(2-aminovinyl)-D-cysteine (Ser-Cys)).

It belongs to the type A lantibiotic family. Post-translationally, maturation of lantibiotics involves the enzymatic conversion of Thr, and Ser into dehydrated AA and the formation of thioether bonds with cysteine. The C-terminal lanthionine undergoes decarboxylation. This is followed by membrane translocation and cleavage of the modified precursor. Occurs in 2 forms, A1 contains 3,4-dihydroxyproline at Pro-14, A2 contains 4-hydroxyproline at Pro-14. The patent report does not provide the stereochemistry of the modified prolines. In terms of processing, the patent report does not describe whether the 2,3-didehydrobutyrine is the E- or Z-isomer. In several diagrams it is shown as the E-isomer.

Lanthionine-containing peptide antibiotic (lantibiotic) active on Gram-positive bacteria. The bactericidal activity of lantibiotics is based on depolarization of energized bacterial cytoplasmic membranes, initiated by the formation of aqueous transmembrane pores. In Microbispora sp. (strain 107891), this protein is Lantibiotic 107891.